The sequence spans 289 residues: MASGFPPQKQETQPGIQHVMEPTPEFSSSNYKPSNKLHGKVALVTGGDSGIGKAVCHCYALEGASVAFTYVKGREDKDAEETLRLLHEVKTREAKEPIMIATDLGFEENCKRVVEEVVNSFGRIDVLVNCAAEQHEVSIEDIDEARLERVFRTNIFSQFFLVKYALKHMKEGSSIINTTSVVAYAGNSSLLEYTATKGAIVSFTRGLALQLAPKGIRVNGVAPGPVWTPLIPASFSEEAIKQFGSETPMKRAAQPVEVAPSYVFLACNHCSSYYTGQILHPNGGLIVNA.

The tract at residues 1 to 32 (MASGFPPQKQETQPGIQHVMEPTPEFSSSNYK) is disordered. Residue 43 to 67 (LVTGGDSGIGKAVCHCYALEGASVA) participates in NAD(+) binding. Ser-180 serves as a coordination point for substrate. Tyr-193 (proton acceptor) is an active-site residue.

This sequence belongs to the short-chain dehydrogenases/reductases (SDR) family.

May act as a short alcohol-polyol-sugar dehydrogenase possibly related to carbohydrate metabolism and the acquisition of desiccation tolerance. May also be involved in signal transduction. This Arabidopsis thaliana (Mouse-ear cress) protein is Glucose and ribitol dehydrogenase homolog 2.